A 61-amino-acid chain; its full sequence is Large ribosomal subunit protein uL29 (61 aa).

It belongs to the universal ribosomal protein uL29 family.

The sequence is that of Large ribosomal subunit protein uL29 from Nitratidesulfovibrio vulgaris (strain ATCC 29579 / DSM 644 / CCUG 34227 / NCIMB 8303 / VKM B-1760 / Hildenborough) (Desulfovibrio vulgaris).